The following is a 152-amino-acid chain: Calcium-binding protein SPEC 1A (152 aa).

4 consecutive EF-hand domains span residues Glu10–Ser45, Tyr46–Lys81, Trp84–Pro119, and Met120–Cys152. Positions 23, 25, 27, 29, 34, 59, 61, 63, 65, 70, 97, 99, 101, 103, 108, 133, 135, 137, 139, and 144 each coordinate Ca(2+). The interval Asp95–Lys121 is disordered.

Found in cell lineages giving rise to the aboral ectoderm, a squamous epithelium covering the surface of the late stage embryo and larva.

Functionally, calcium-binding protein involved in larval development and metamorphosis. Likely to function as calcium buffers mediating the transport of calcium from the sea water to the blastocoel where calcium is required for skeleton formation. This is Calcium-binding protein SPEC 1A (SPEC1) from Strongylocentrotus purpuratus (Purple sea urchin).